A 593-amino-acid polypeptide reads, in one-letter code: Zinc metalloproteinase-disintegrin-like atrase-B (593 aa).

The first 20 residues, 1–20, serve as a signal peptide directing secretion; sequence MIQALLVIICLAVFPHQGSS. Positions 21–191 are excised as a propeptide; that stretch reads IILESGNVND…DESIEKTSQL (171 aa). One can recognise a Peptidase M12B domain in the interval 205 to 400; sequence KYIEFYVIVD…DRPQCILNKP (196 aa). Ca(2+) contacts are provided by glutamate 208 and aspartate 292. Disulfide bonds link cysteine 316-cysteine 395, cysteine 356-cysteine 379, and cysteine 358-cysteine 363. N-linked (GlcNAc...) asparagine glycosylation is present at asparagine 319. Histidine 341 provides a ligand contact to Zn(2+). The active site involves glutamate 342. The Zn(2+) site is built by histidine 345 and histidine 351. Residues cysteine 395, asparagine 398, isoleucine 410, asparagine 413, phenylalanine 415, glutamate 417, glutamate 420, and aspartate 423 each contribute to the Ca(2+) site. Residues 408 to 477 enclose the Disintegrin domain; the sequence is PPICGNYFVE…ECPTDSLQRN (70 aa). 11 disulfide bridges follow: cysteine 422–cysteine 435, cysteine 424–cysteine 430, cysteine 434–cysteine 440, cysteine 449–cysteine 469, cysteine 456–cysteine 488, cysteine 481–cysteine 493, cysteine 500–cysteine 550, cysteine 515–cysteine 558, cysteine 528–cysteine 538, cysteine 545–cysteine 581, and cysteine 575–cysteine 586. The D/ECD-tripeptide motif lies at 455 to 457; that stretch reads DCD. Ca(2+)-binding residues include aspartate 457, leucine 458, glutamate 460, and aspartate 472. The N-linked (GlcNAc...) asparagine glycan is linked to asparagine 490.

The protein belongs to the venom metalloproteinase (M12B) family. P-III subfamily. P-IIIa sub-subfamily. Monomer. The cofactor is Zn(2+). Expressed by the venom gland.

The protein resides in the secreted. Its activity is regulated as follows. Inhibited by EDTA, EGTA, 1,10-phenanthroline and DTT. Not inhibited by PMSF and SBTI. Snake venom zinc protease that inhibits the classical and alternative pathways of complement by cleaving factor B, C6, C7, and C8. Also slowly and selectively degrades alpha-chain of fibrinogen (FGA), and shows edema-inducing activity. The sequence is that of Zinc metalloproteinase-disintegrin-like atrase-B from Naja atra (Chinese cobra).